A 397-amino-acid polypeptide reads, in one-letter code: MDMDQQLKTILRGSAEFIDEEELKKKLAKGRPLRVKAGFDPTAPDLHLGHTVLIHKLRHFQELGHTVIFLIGDFTGMIGDPSGRSETRPPLTREQVLQNAETYKKQVFKILDPEKTEVRFNSEWMDKFGAADFIRLASRYTVARMLERDDFEKRYRSNMTISIHEFLYPLVQGYDSVALEADVELGGTDQKFNLLVGRHLQSQEGQEPQCVLTVPILEGLDGVKKMSKSLGNYVGIDEPPADMFGKLMSVSDELMWRYYELITTKTLDEIAELQRRVASGELHPKTAKEELAEHITAQYHGSDKAAEARQGFNAVFAQGCVPDDMPEFSCSCGEDSTPPAFLADSGLAGSRGEAKRLIKQGALSLDGEKLDDPNTPLTAGEYVVRLGKKRFLRLIVR.

The 'HIGH' region motif lies at 41-50 (PTAPDLHLGH). Positions 225–229 (KMSKS) match the 'KMSKS' region motif. Residue Lys228 coordinates ATP. The region spanning 340 to 396 (AFLADSGLAGSRGEAKRLIKQGALSLDGEKLDDPNTPLTAGEYVVRLGKKRFLRLIV) is the S4 RNA-binding domain.

This sequence belongs to the class-I aminoacyl-tRNA synthetase family. TyrS type 2 subfamily. As to quaternary structure, homodimer.

The protein resides in the cytoplasm. The enzyme catalyses tRNA(Tyr) + L-tyrosine + ATP = L-tyrosyl-tRNA(Tyr) + AMP + diphosphate + H(+). Functionally, catalyzes the attachment of tyrosine to tRNA(Tyr) in a two-step reaction: tyrosine is first activated by ATP to form Tyr-AMP and then transferred to the acceptor end of tRNA(Tyr). The sequence is that of Tyrosine--tRNA ligase from Oleidesulfovibrio alaskensis (strain ATCC BAA-1058 / DSM 17464 / G20) (Desulfovibrio alaskensis).